Reading from the N-terminus, the 94-residue chain is Small ribosomal subunit protein bS20c (94 aa).

This sequence belongs to the bacterial ribosomal protein bS20 family.

Its subcellular location is the plastid. It localises to the chloroplast. Its function is as follows. Binds directly to 16S ribosomal RNA. This chain is Small ribosomal subunit protein bS20c, found in Porphyra purpurea (Red seaweed).